The sequence spans 609 residues: Membrane protein insertase YidC (609 aa).

Residues isoleucine 9–proline 29 traverse the membrane as a helical segment. Residues arginine 35 to alanine 63 are disordered. 4 helical membrane-spanning segments follow: residues valine 375–phenylalanine 395, leucine 449–isoleucine 469, leucine 507–phenylalanine 527, and tryptophan 546–tryptophan 566.

Belongs to the OXA1/ALB3/YidC family. Type 1 subfamily. Interacts with the Sec translocase complex via SecD. Specifically interacts with transmembrane segments of nascent integral membrane proteins during membrane integration.

The protein resides in the cell inner membrane. Its function is as follows. Required for the insertion and/or proper folding and/or complex formation of integral membrane proteins into the membrane. Involved in integration of membrane proteins that insert both dependently and independently of the Sec translocase complex, as well as at least some lipoproteins. Aids folding of multispanning membrane proteins. The protein is Membrane protein insertase YidC of Nitrobacter hamburgensis (strain DSM 10229 / NCIMB 13809 / X14).